We begin with the raw amino-acid sequence, 217 residues long: Segregation and condensation protein B (217 aa).

This sequence belongs to the ScpB family. In terms of assembly, homodimer. Homodimerization may be required to stabilize the binding of ScpA to the Smc head domains. Component of a cohesin-like complex composed of ScpA, ScpB and the Smc homodimer, in which ScpA and ScpB bind to the head domain of Smc. The presence of the three proteins is required for the association of the complex with DNA.

It is found in the cytoplasm. Functionally, participates in chromosomal partition during cell division. May act via the formation of a condensin-like complex containing Smc and ScpA that pull DNA away from mid-cell into both cell halves. The protein is Segregation and condensation protein B of Geobacillus kaustophilus (strain HTA426).